The following is a 252-amino-acid chain: 2-succinyl-6-hydroxy-2,4-cyclohexadiene-1-carboxylate synthase (252 aa).

Belongs to the AB hydrolase superfamily. MenH family. In terms of assembly, monomer.

The catalysed reaction is 5-enolpyruvoyl-6-hydroxy-2-succinyl-cyclohex-3-ene-1-carboxylate = (1R,6R)-6-hydroxy-2-succinyl-cyclohexa-2,4-diene-1-carboxylate + pyruvate. It functions in the pathway quinol/quinone metabolism; 1,4-dihydroxy-2-naphthoate biosynthesis; 1,4-dihydroxy-2-naphthoate from chorismate: step 3/7. It participates in quinol/quinone metabolism; menaquinone biosynthesis. Catalyzes a proton abstraction reaction that results in 2,5-elimination of pyruvate from 2-succinyl-5-enolpyruvyl-6-hydroxy-3-cyclohexene-1-carboxylate (SEPHCHC) and the formation of 2-succinyl-6-hydroxy-2,4-cyclohexadiene-1-carboxylate (SHCHC). The chain is 2-succinyl-6-hydroxy-2,4-cyclohexadiene-1-carboxylate synthase from Escherichia coli O81 (strain ED1a).